Reading from the N-terminus, the 480-residue chain is Glutamate--tRNA ligase (480 aa).

Residues 21-31 carry the 'HIGH' region motif; that stretch reads PSPTGYLHVGG. Residues 122 to 146 are compositionally biased toward basic and acidic residues; the sequence is NTQEQNKQKPRYDRHCLGDHKHSPE. Positions 122–149 are disordered; sequence NTQEQNKQKPRYDRHCLGDHKHSPEQPH. Positions 248–252 match the 'KMSKS' region motif; it reads KLSKR. K251 contributes to the ATP binding site.

Belongs to the class-I aminoacyl-tRNA synthetase family. Glutamate--tRNA ligase type 1 subfamily. In terms of assembly, monomer.

It is found in the cytoplasm. It catalyses the reaction tRNA(Glu) + L-glutamate + ATP = L-glutamyl-tRNA(Glu) + AMP + diphosphate. Functionally, catalyzes the attachment of glutamate to tRNA(Glu) in a two-step reaction: glutamate is first activated by ATP to form Glu-AMP and then transferred to the acceptor end of tRNA(Glu). This Pasteurella multocida (strain Pm70) protein is Glutamate--tRNA ligase.